Here is a 363-residue protein sequence, read N- to C-terminus: Chemerin-like receptor 1 (363 aa).

At 1–39 the chain is on the extracellular side; sequence MDFEDYNSTYEDSYTDDFDTIVALEEFSPLEGRVVRIFL. N-linked (GlcNAc...) asparagine glycosylation occurs at asparagine 7. A helical transmembrane segment spans residues 40 to 60; it reads VVVYSIICFLGILGNGLVIVI. The Cytoplasmic segment spans residues 61-71; that stretch reads ATFKMKKTVNT. The chain crosses the membrane as a helical span at residues 72–92; it reads VWFLNLAVADFLFNVFLPIHI. Residues 93-109 are Extracellular-facing; it reads AYAAMDYHWVFGTAMCK. An intrachain disulfide couples cysteine 108 to cysteine 185. A helical membrane pass occupies residues 110-130; sequence ISNFLLIHNMYTSVFLLTVIS. Topologically, residues 131 to 152 are cytoplasmic; the sequence is FDRCISVLLPVWSQNHRSIRLA. The chain crosses the membrane as a helical span at residues 153-173; sequence YMACVVIWVLAFFLSSPSLVF. The Extracellular portion of the chain corresponds to 174-220; that stretch reads RDTAHLHGKISCFNNFSLSATSSSSWPTHPQMDTVGFGRQMVVTITR. N-linked (GlcNAc...) asparagine glycosylation occurs at asparagine 188. A helical transmembrane segment spans residues 221–241; that stretch reads FLCGFLVPVLIISACYFTIVY. Residues 242 to 256 are Cytoplasmic-facing; it reads KLRRNRLAKTKKPFK. The chain crosses the membrane as a helical span at residues 257 to 277; that stretch reads IIVTIIITFFLCWCPYHTLYL. The Extracellular portion of the chain corresponds to 278–283; the sequence is LELHHR. A helical transmembrane segment spans residues 284-304; sequence AMPGSVFSLGVPLATAIAIAN. The Cytoplasmic portion of the chain corresponds to 305-363; that stretch reads SCMNPILYVFMGQDFKKFKVALFSRLVNALSEDTGHSSYPSHRSFTKMSSMNERETSML. Serine 335 is subject to Phosphoserine. The tract at residues 337–363 is disordered; it reads DTGHSSYPSHRSFTKMSSMNERETSML. Threonine 338 carries the post-translational modification Phosphothreonine. Residues 340-355 are compositionally biased toward polar residues; the sequence is HSSYPSHRSFTKMSSM. 3 positions are modified to phosphoserine: serine 345, serine 348, and serine 354.

Belongs to the chemokine-like receptor (CMKLR) family. Predominantly expressed in spleen and temperately in adipose tissue.

The protein localises to the cell membrane. Receptor for the chemoattractant adipokine chemerin/RARRES2 and for the omega-3 fatty acid derived molecule resolvin E1. Interaction with RARRES2 initiates activation of G proteins G(i)/G(o) and beta-arrestin pathways inducing cellular responses via second messenger pathways such as intracellular calcium mobilization, phosphorylation of MAP kinases MAPK1/MAPK3 (ERK1/2), TYRO3, MAPK14/P38MAPK and PI3K leading to multifunctional effects, like, reduction of immune responses, enhancing of adipogenesis and angionesis. Resolvin E1 down-regulates cytokine production in macrophages by reducing the activation of MAPK1/3 (ERK1/2) and NF-kappa-B. Positively regulates adipogenesis and adipocyte metabolism. The chain is Chemerin-like receptor 1 (CMLKR1) from Sus scrofa (Pig).